The sequence spans 369 residues: 2-aminoethylphosphonate--pyruvate transaminase (369 aa).

Lysine 193 carries the post-translational modification N6-(pyridoxal phosphate)lysine.

This sequence belongs to the class-V pyridoxal-phosphate-dependent aminotransferase family. PhnW subfamily. Homodimer. Pyridoxal 5'-phosphate serves as cofactor.

The enzyme catalyses (2-aminoethyl)phosphonate + pyruvate = phosphonoacetaldehyde + L-alanine. In terms of biological role, involved in phosphonate degradation. This chain is 2-aminoethylphosphonate--pyruvate transaminase, found in Pseudomonas fluorescens (strain Pf0-1).